The chain runs to 440 residues: Coenzyme A disulfide reductase (440 aa).

FAD is bound at residue 8-33 (GAVAGGATCASQIRRLDKDSEITIFE). Substrate is bound by residues Thr15, Gln19, Arg22, Ser39, and Asn42. Cys43 acts as the Nucleophile in catalysis. The active-site Redox-active is Cys43. Lys71 contributes to the substrate binding site. 151-166 (ALVVGAGYISLEVLEN) contributes to the NADP(+) binding site. 267 to 277 (TNIPNIYALGD) provides a ligand contact to FAD. Position 299 (His299) interacts with substrate. Tyr419 contributes to the FAD binding site. Lys427 serves as a coordination point for substrate.

The protein belongs to the class-III pyridine nucleotide-disulfide oxidoreductase family. As to quaternary structure, homodimer. Requires FAD as cofactor.

The enzyme catalyses NADP(+) + 2 CoA = CoA-disulfide + NADPH + H(+). Its function is as follows. Catalyzes specifically the NADPH-dependent reduction of coenzyme A disulfide. The chain is Coenzyme A disulfide reductase from Staphylococcus haemolyticus (strain JCSC1435).